A 242-amino-acid polypeptide reads, in one-letter code: Uridylate kinase (242 aa).

Residue 13–16 participates in ATP binding; sequence KLSG. Glycine 55 is a binding site for UMP. Glycine 56 and arginine 60 together coordinate ATP. UMP-binding positions include aspartate 75 and 136–143; that span reads TGNPFFTT. ATP is bound by residues threonine 163, tyrosine 169, and aspartate 172.

Belongs to the UMP kinase family. In terms of assembly, homohexamer.

Its subcellular location is the cytoplasm. It catalyses the reaction UMP + ATP = UDP + ADP. The protein operates within pyrimidine metabolism; CTP biosynthesis via de novo pathway; UDP from UMP (UMPK route): step 1/1. Inhibited by UTP. Catalyzes the reversible phosphorylation of UMP to UDP. The polypeptide is Uridylate kinase (Zymomonas mobilis subsp. mobilis (strain ATCC 31821 / ZM4 / CP4)).